The sequence spans 754 residues: FAD-dependent monooxygenase ntnA (754 aa).

A helical membrane pass occupies residues 3–23 (IPFKVLIIGGGVAGLTLAIML). Residues E34, G48, and R109 each contribute to the FAD site. Y218 is an active-site residue. Residues D311 and A324 each coordinate FAD. Transmembrane regions (helical) follow at residues 446–466 (PLAT…PWLA), 486–506 (AEVL…MWVI), 536–556 (ILPI…YYYM), and 563–583 (LGVA…SAVC). N586 carries an N-linked (GlcNAc...) asparagine glycan. A helical membrane pass occupies residues 595 to 615 (SWWFTADFAFPVVAYLSGMFL). N-linked (GlcNAc...) asparagine glycosylation is present at N616. 2 helical membrane passes run 644-664 (IAFV…TTIL) and 679-697 (LASL…AWEL). Residue N701 is glycosylated (N-linked (GlcNAc...) asparagine). The helical transmembrane segment at 712–732 (LTILSSTIFGGPAATLAGTFI) threads the bilayer.

This sequence belongs to the paxM FAD-dependent monooxygenase family. FAD serves as cofactor.

The protein localises to the membrane. Its pathway is secondary metabolite biosynthesis; terpenoid biosynthesis. Functionally, FAD-dependent monooxygenase; part of the gene cluster that mediates the biosynthesis of the meroterpenoids nectripenoids A and B, as well as cochliquninone D and isocochliquninone E. The pathway probably begins with the HR-PKS ntnH that catalyzes two chain-extension steps to form a reduced triketide, which then primes the SAT domain in the NR-PKS ntnG to initiate three more cycles of extension to give a linear hexaketide corresponding to the polyketide part of nectripenoids. The FAD-dependent monooxygenase ntnJ then performs an oxidative decarboxylation at C11 of the ntnH/ntnG product, via an electrophilic aromatic hydroxylation with concomitant ipso-decarboxylation. The membrane-bound polyprenyl transferase ntnF then introduces a farnesyl group before the FAD-dependent monooxygenase ntnK functions as the first epoxidase on terminal C12'-C13' olefin, followed by a second epoxidation on C7'-C8' catalyzed by ntnA. The terpene cyclase/mutase ntnI then initiates the sequential tricyclic ring formation through protonation of the terminal epoxide and catalyzes the regioselective and stereoselective 6/6/6-tricyclic ring formation. The cytochrome P450 monooxygenase ntnM may then hydroxylate C1'. This is FAD-dependent monooxygenase ntnA from Nectria sp.